The primary structure comprises 68 residues: Cold shock-like protein CspA (68 aa).

Residues 4-64 form the CSD domain; the sequence is GTVKWFNDAK…GPKGLQAQNV (61 aa).

The protein localises to the cytoplasm. In Stigmatella aurantiaca (strain DW4/3-1), this protein is Cold shock-like protein CspA (cspA).